A 650-amino-acid chain; its full sequence is Leukocyte immunoglobulin-like receptor subfamily B member 1 (650 aa).

Residues 1–23 (MTPILTVLICLGLSLGPRTHVQA) form the signal peptide. Residues 24 to 461 (GHLPKPTLWA…QSGLGRHLGV (438 aa)) lie on the Extracellular side of the membrane. Ig-like C2-type domains are found at residues 27–115 (PKPT…DPLE), 116–221 (LVVT…LVLG), 222–312 (VSKK…APSD), and 313–409 (PLDI…YLLT). 4 cysteine pairs are disulfide-bonded: cysteine 49-cysteine 98, cysteine 145-cysteine 197, cysteine 157-cysteine 167, and cysteine 246-cysteine 297. Asparagine 281, asparagine 302, and asparagine 341 each carry an N-linked (GlcNAc...) asparagine glycan. Cysteine 346 and cysteine 397 form a disulfide bridge. The interval 415 to 451 (LELVVSGPSGGPSSPTTGPTSTSGPEDQPLTPTGSDP) is disordered. The span at 425-439 (GPSSPTTGPTSTSGP) shows a compositional bias: low complexity. Residues 462 to 482 (VIGILVAVILLLLLLLLLFLI) traverse the membrane as a helical segment. At 483–650 (LRHRRQGKHW…PSIYATLAIH (168 aa)) the chain is on the cytoplasmic side. Residues 491-524 (HWTSTQRKADFQHPAGAVGPEPTDRGLQWRSSPA) are disordered. 2 consecutive short sequence motifs (ITIM motif) follow at residues 531–536 (NLYAAV) and 560–565 (VTYAEV). Tyrosine 533 carries the post-translational modification Phosphotyrosine. A disordered region spans residues 563 to 650 (AEVKHSRPRR…PSIYATLAIH (88 aa)). Composition is skewed to basic and acidic residues over residues 564–574 (EVKHSRPRREM) and 586–600 (LDTKDRQAEEDRQMD). 2 short sequence motifs (ITIM motif) span residues 612–617 (VTYAQL) and 642–647 (SIYATL). 2 positions are modified to phosphotyrosine: tyrosine 614 and tyrosine 644.

As to quaternary structure, binds PTPN6 when phosphorylated. Binds FCER1A and FCGR1A. Interacts with human cytomegalovirus/HHV-5 protein UL18. Interacts with peptide-bound HLA-G-B2M complex. Interacts with peptide-bound HLA-F-B2M complex but not with peptide-free HLA-F open conformer. It does not probe the peptide sequence directly. Phosphorylated on tyrosine residues. Dephosphorylated by PTPN6. As to expression, expressed in B cells, monocytes and various dendritic cell (DC) subsets including myeloid, plasmacytoid and tolerogenic DCs (at protein level). Expressed in decidual macrophages (at protein level). Expressed in decidual NK cells (at protein level).

It is found in the cell membrane. Its subcellular location is the secreted. Functionally, receptor for class I MHC antigens. Recognizes a broad spectrum of HLA-A, HLA-B, HLA-C, HLA-G and HLA-F alleles. Receptor for H301/UL18, a human cytomegalovirus class I MHC homolog. Ligand binding results in inhibitory signals and down-regulation of the immune response. Engagement of LILRB1 present on natural killer cells or T-cells by class I MHC molecules protects the target cells from lysis. Interaction with HLA-B or HLA-E leads to inhibition of FCER1A signaling and serotonin release. Inhibits FCGR1A-mediated phosphorylation of cellular proteins and mobilization of intracellular calcium ions. Recognizes HLA-G in complex with B2M/beta-2 microglobulin and a nonamer self-peptide. Upon interaction with peptide-bound HLA-G-B2M complex, triggers secretion of growth-promoting factors by decidual NK cells. Reprograms B cells toward an immune suppressive phenotype. In Homo sapiens (Human), this protein is Leukocyte immunoglobulin-like receptor subfamily B member 1.